The sequence spans 195 residues: Protein hunchback (195 aa).

Disordered stretches follow at residues 16–57 (SHHH…SHTN), 64–83 (LKQQQQQQQQHQHQQQQQPM), and 155–195 (LTPP…KYMA). Basic residues predominate over residues 17–29 (HHHHHHHAHHSHH). Composition is skewed to low complexity over residues 33–44 (SNSNSNASSPHQ) and 66–81 (QQQQQQQQHQHQQQQQ). Over residues 176 to 195 (EPEKEHDLMSNSSEDMKYMA) the composition is skewed to basic and acidic residues.

This sequence belongs to the hunchback C2H2-type zinc-finger protein family.

Its subcellular location is the nucleus. Its function is as follows. Gap class segmentation protein that controls development of head structures. This is Protein hunchback (hb) from Drosophila dasycnemia (Fruit fly).